Consider the following 332-residue polypeptide: Transaldolase (332 aa).

The Schiff-base intermediate with substrate role is filled by K135.

Belongs to the transaldolase family. Type 1 subfamily. In terms of assembly, homodimer.

It is found in the cytoplasm. The enzyme catalyses D-sedoheptulose 7-phosphate + D-glyceraldehyde 3-phosphate = D-erythrose 4-phosphate + beta-D-fructose 6-phosphate. The protein operates within carbohydrate degradation; pentose phosphate pathway; D-glyceraldehyde 3-phosphate and beta-D-fructose 6-phosphate from D-ribose 5-phosphate and D-xylulose 5-phosphate (non-oxidative stage): step 2/3. In terms of biological role, transaldolase is important for the balance of metabolites in the pentose-phosphate pathway. The protein is Transaldolase of Prochlorococcus marinus (strain NATL1A).